Reading from the N-terminus, the 1111-residue chain is ATP-dependent DNA helicase mph1 (1111 aa).

Composition is skewed to acidic residues over residues Met1–Asp18 and Val47–Gln65. Disordered regions lie at residues Met1–Glu81, Phe101–Asp144, Ala210–Arg240, and Ile259–His280. Polar residues-rich tracts occupy residues Pro132–Pro143 and Leu215–Thr238. Residues Ile306–Lys474 enclose the Helicase ATP-binding domain. Leu319 to Thr326 lines the ATP pocket. A DEAH box motif is present at residues Asp422–His425. The region spanning Tyr644–Thr818 is the Helicase C-terminal domain. Disordered regions lie at residues Ile836 to Thr898, Ser998 to Glu1047, and Ala1092 to Glu1111. Over residues Lys852–Phe864 the composition is skewed to basic residues.

Belongs to the DEAD box helicase family. DEAH subfamily. FANCM sub-subfamily. In terms of assembly, interacts with the MHF histone-fold complex to form the FANCM-MHF complex.

The protein resides in the nucleus. It carries out the reaction ATP + H2O = ADP + phosphate + H(+). Functionally, ATP-dependent DNA helicase involved in DNA damage repair by homologous recombination and in genome maintenance. Capable of unwinding D-loops. Plays a role in limiting crossover recombinants during mitotic DNA double-strand break (DSB) repair. Component of a FANCM-MHF complex which promotes gene conversion at blocked replication forks, probably by reversal of the stalled fork. This is ATP-dependent DNA helicase mph1 from Neosartorya fischeri (strain ATCC 1020 / DSM 3700 / CBS 544.65 / FGSC A1164 / JCM 1740 / NRRL 181 / WB 181) (Aspergillus fischerianus).